Consider the following 186-residue polypeptide: Threonylcarbamoyl-AMP synthase (186 aa).

The YrdC-like domain occupies 5–186; it reads TQSINDAVKC…DAITGEILRL (182 aa).

The protein belongs to the SUA5 family. TsaC subfamily.

Its subcellular location is the cytoplasm. It catalyses the reaction L-threonine + hydrogencarbonate + ATP = L-threonylcarbamoyladenylate + diphosphate + H2O. Required for the formation of a threonylcarbamoyl group on adenosine at position 37 (t(6)A37) in tRNAs that read codons beginning with adenine. Catalyzes the conversion of L-threonine, HCO(3)(-)/CO(2) and ATP to give threonylcarbamoyl-AMP (TC-AMP) as the acyladenylate intermediate, with the release of diphosphate. This Coxiella burnetii (strain RSA 331 / Henzerling II) protein is Threonylcarbamoyl-AMP synthase.